The chain runs to 360 residues: UDP-N-acetylglucosamine--N-acetylmuramyl-(pentapeptide) pyrophosphoryl-undecaprenol N-acetylglucosamine transferase (360 aa).

UDP-N-acetyl-alpha-D-glucosamine-binding positions include 12-14, Ser198, and Gln289; that span reads TAG.

Belongs to the glycosyltransferase 28 family. MurG subfamily.

The protein localises to the cell membrane. It catalyses the reaction Mur2Ac(oyl-L-Ala-gamma-D-Glu-L-Lys-D-Ala-D-Ala)-di-trans,octa-cis-undecaprenyl diphosphate + UDP-N-acetyl-alpha-D-glucosamine = beta-D-GlcNAc-(1-&gt;4)-Mur2Ac(oyl-L-Ala-gamma-D-Glu-L-Lys-D-Ala-D-Ala)-di-trans,octa-cis-undecaprenyl diphosphate + UDP + H(+). It functions in the pathway cell wall biogenesis; peptidoglycan biosynthesis. Functionally, cell wall formation. Catalyzes the transfer of a GlcNAc subunit on undecaprenyl-pyrophosphoryl-MurNAc-pentapeptide (lipid intermediate I) to form undecaprenyl-pyrophosphoryl-MurNAc-(pentapeptide)GlcNAc (lipid intermediate II). The protein is UDP-N-acetylglucosamine--N-acetylmuramyl-(pentapeptide) pyrophosphoryl-undecaprenol N-acetylglucosamine transferase of Streptococcus equi subsp. equi (strain 4047).